The primary structure comprises 228 residues: Orotidine 5'-phosphate decarboxylase (228 aa).

Residues Asp20, Lys42, 70–79 (DFKVADIPET), Ser127, 180–190 (PGVGAQGGDPG), Gly202, and Arg203 contribute to the substrate site. The Proton donor role is filled by Lys72.

The protein belongs to the OMP decarboxylase family. Type 1 subfamily. In terms of assembly, homodimer.

It carries out the reaction orotidine 5'-phosphate + H(+) = UMP + CO2. Its pathway is pyrimidine metabolism; UMP biosynthesis via de novo pathway; UMP from orotate: step 2/2. In terms of biological role, catalyzes the decarboxylation of orotidine 5'-monophosphate (OMP) to uridine 5'-monophosphate (UMP). The protein is Orotidine 5'-phosphate decarboxylase (pyrF) of Methanothermobacter thermautotrophicus (strain ATCC 29096 / DSM 1053 / JCM 10044 / NBRC 100330 / Delta H) (Methanobacterium thermoautotrophicum).